The sequence spans 35 residues: Cupiennin-1b (35 aa).

Glu35 is subject to Glutamic acid 1-amide.

It belongs to the cationic peptide 04 (cupiennin) family. 01 subfamily. In terms of tissue distribution, expressed by the venom gland.

It is found in the secreted. Functionally, has antimicrobial activity against E.coli, E.faecalis, P.aeruginosa, and S.aureus. Has insecticidal and hemolytic activities. Probably acts by disturbing membrane function with its amphipathic structure. This is Cupiennin-1b from Cupiennius salei (American wandering spider).